The sequence spans 194 residues: Fe/S biogenesis protein NfuA (194 aa).

Cysteine 152 and cysteine 155 together coordinate [4Fe-4S] cluster.

Belongs to the NfuA family. Homodimer. Requires [4Fe-4S] cluster as cofactor.

Involved in iron-sulfur cluster biogenesis. Binds a 4Fe-4S cluster, can transfer this cluster to apoproteins, and thereby intervenes in the maturation of Fe/S proteins. Could also act as a scaffold/chaperone for damaged Fe/S proteins. This Pseudomonas putida (strain GB-1) protein is Fe/S biogenesis protein NfuA.